Consider the following 225-residue polypeptide: Orotate phosphoribosyltransferase (225 aa).

Residues Lys26, 73-74 (YK), Arg100, Lys101, Lys104, His106, and 127-135 (EDVTTAGTS) each bind 5-phospho-alpha-D-ribose 1-diphosphate. Residues Thr131 and Arg160 each coordinate orotate.

This sequence belongs to the purine/pyrimidine phosphoribosyltransferase family. PyrE subfamily. Homodimer. Mg(2+) serves as cofactor.

The enzyme catalyses orotidine 5'-phosphate + diphosphate = orotate + 5-phospho-alpha-D-ribose 1-diphosphate. It participates in pyrimidine metabolism; UMP biosynthesis via de novo pathway; UMP from orotate: step 1/2. In terms of biological role, catalyzes the transfer of a ribosyl phosphate group from 5-phosphoribose 1-diphosphate to orotate, leading to the formation of orotidine monophosphate (OMP). The protein is Orotate phosphoribosyltransferase of Lachnoclostridium phytofermentans (strain ATCC 700394 / DSM 18823 / ISDg) (Clostridium phytofermentans).